The primary structure comprises 551 residues: Glucose-6-phosphate isomerase (551 aa).

The active-site Proton donor is glutamate 349. Residues histidine 378 and lysine 480 contribute to the active site.

This sequence belongs to the GPI family.

The protein localises to the cytoplasm. It catalyses the reaction alpha-D-glucose 6-phosphate = beta-D-fructose 6-phosphate. Its pathway is carbohydrate biosynthesis; gluconeogenesis. It participates in carbohydrate degradation; glycolysis; D-glyceraldehyde 3-phosphate and glycerone phosphate from D-glucose: step 2/4. Functionally, catalyzes the reversible isomerization of glucose-6-phosphate to fructose-6-phosphate. This Parasynechococcus marenigrum (strain WH8102) protein is Glucose-6-phosphate isomerase.